Here is a 358-residue protein sequence, read N- to C-terminus: Methylthioribose-1-phosphate isomerase (358 aa).

Substrate is bound by residues 54-56 (RGA), R96, and Q205. D246 (proton donor) is an active-site residue. Residue 256 to 257 (NK) participates in substrate binding.

Belongs to the eIF-2B alpha/beta/delta subunits family. MtnA subfamily.

The catalysed reaction is 5-(methylsulfanyl)-alpha-D-ribose 1-phosphate = 5-(methylsulfanyl)-D-ribulose 1-phosphate. It participates in amino-acid biosynthesis; L-methionine biosynthesis via salvage pathway; L-methionine from S-methyl-5-thio-alpha-D-ribose 1-phosphate: step 1/6. Its function is as follows. Catalyzes the interconversion of methylthioribose-1-phosphate (MTR-1-P) into methylthioribulose-1-phosphate (MTRu-1-P). This is Methylthioribose-1-phosphate isomerase from Pseudomonas savastanoi pv. phaseolicola (strain 1448A / Race 6) (Pseudomonas syringae pv. phaseolicola (strain 1448A / Race 6)).